The following is a 704-amino-acid chain: Boron transporter 1 (704 aa).

Residues 1–35 (MEETFVPFEGIKNDLKGRLMCYKQDWTGGFKAGFR) lie on the Cytoplasmic side of the membrane. A helical membrane pass occupies residues 36–56 (ILAPTTYIFFASAIPVISFGE). Over 57–75 (QLERSTDGVLTAVQTLAST) the chain is Extracellular. The helical transmembrane segment at 76–96 (AICGMIHSIIGGQPLLILGVA) threads the bilayer. Residues 97–120 (EPTVIMYTFMFNFAKARPELGRDL) lie on the Cytoplasmic side of the membrane. The chain crosses the membrane as a helical span at residues 121-141 (FLAWSGWVCVWTALMLFVLAI). Residues 142 to 155 (CGACSIINRFTRVA) lie on the Extracellular side of the membrane. A helical transmembrane segment spans residues 156 to 176 (GELFGLLIAMLFMQQAIKGLV). Residues 177–195 (DEFRIPERENQKLKEFLPS) lie on the Cytoplasmic side of the membrane. A helical membrane pass occupies residues 196-216 (WRFANGMFALVLSFGLLLTGL). Residues 217–233 (RSRKARSWRYGTGWLRS) are Extracellular-facing. The helical transmembrane segment at 234 to 254 (LIADYGVPLMVLVWTGVSYIP) threads the bilayer. The Cytoplasmic portion of the chain corresponds to 255 to 289 (AGDVPKGIPRRLFSPNPWSPGAYGNWTVVKEMLDV). Residues 290–310 (PIVYIIGAFIPASMIAVLYYF) traverse the membrane as a helical segment. The Extracellular segment spans residues 311–337 (DHSVASQLAQQKEFNLRKPSSYHYDLL). The chain crosses the membrane as a helical span at residues 338–358 (LLGFLTLMCGLLGVPPSNGVI). At 359–480 (PQSPMHTKSL…STMVGGCVAA (122 aa)) the chain is on the cytoplasmic side. Residues 481 to 501 (MPILKMIPTSVLWGYFAFMAI) traverse the membrane as a helical segment. At 502–557 (ESLPGNQFWERILLLFTAPSRRFKVLEDYHATFVETVPFKTIAMFTLFQTTYLLIC) the chain is on the extracellular side. A helical transmembrane segment spans residues 558–578 (FGLTWIPIAGVMFPLMIMFLI). The Cytoplasmic portion of the chain corresponds to 579–704 (PVRQYLLPRF…RSPLNQSSSN (126 aa)). Residues 641–704 (EFRHTSSPKV…RSPLNQSSSN (64 aa)) are disordered. Residues 647 to 664 (SPKVTSSSSTPVNNRSLS) show a composition bias toward low complexity.

It belongs to the anion exchanger (TC 2.A.31.3) family. As to expression, expressed in proximal side of various root cells, notably in the columella, lateral root cap, epidermis and endodermis in tip and elongation zones of the root. Also detected in the epidermis, cortex, endodermis, and stele cells of the root hair zone. Observed in cotyledons and hypocotyls.

It localises to the cell membrane. The protein localises to the endosome membrane. The protein resides in the vacuole membrane. Functionally, efflux-type boron (B) transporter for xylem loading, responsive of boron translocation from roots to shoots under boron limitation. Boron is essential for maintaining the integrity of plants cell walls. This chain is Boron transporter 1, found in Arabidopsis thaliana (Mouse-ear cress).